Here is a 285-residue protein sequence, read N- to C-terminus: 2,4-didehydro-3-deoxy-L-rhamnonate hydrolase (285 aa).

Leu-73 serves as a coordination point for pyruvate. Residues Glu-119, Glu-121, and Asp-150 each contribute to the Mg(2+) site. Lys-168 and Thr-238 together coordinate pyruvate.

The protein belongs to the FAH family. As to quaternary structure, homodimer. Mg(2+) is required as a cofactor.

The enzyme catalyses 2,4-didehydro-3-deoxy-L-rhamnonate + H2O = (S)-lactate + pyruvate + H(+). Its pathway is carbohydrate degradation; L-rhamnose degradation. Functionally, hydrolase that catalyzes the hydrolysis of 2,4-didehydro-3-deoxy-L-rhamnonate to pyruvate and L-lactate. Can also hydrolyze L-2,4-diketo-3-deoxylyxonate and L-2,4-diketo-3-deoxymannonate. In vitro can also use acylpyruvates such as acetylpyruvate and trimethylacetopyruvate. Catalyzes the fifth (last) step in an alternative pathway for rhamnose utilization that does not involve phosphorylated intermediates. In Sphingomonas sp. (strain SKA58), this protein is 2,4-didehydro-3-deoxy-L-rhamnonate hydrolase.